The sequence spans 295 residues: Shikimate dehydrogenase (NADP(+)) (295 aa).

Shikimate is bound by residues 21–23 (SLS) and threonine 68. Catalysis depends on lysine 72, which acts as the Proton acceptor. The shikimate site is built by asparagine 93 and aspartate 108. Residues 132-136 (GAGGA), 156-161 (NRTPER), and leucine 228 each bind NADP(+). Tyrosine 230 lines the shikimate pocket. Position 251 (glycine 251) interacts with NADP(+).

This sequence belongs to the shikimate dehydrogenase family. In terms of assembly, homodimer.

It carries out the reaction shikimate + NADP(+) = 3-dehydroshikimate + NADPH + H(+). The protein operates within metabolic intermediate biosynthesis; chorismate biosynthesis; chorismate from D-erythrose 4-phosphate and phosphoenolpyruvate: step 4/7. Its function is as follows. Involved in the biosynthesis of the chorismate, which leads to the biosynthesis of aromatic amino acids. Catalyzes the reversible NADPH linked reduction of 3-dehydroshikimate (DHSA) to yield shikimate (SA). The polypeptide is Shikimate dehydrogenase (NADP(+)) (Moorella thermoacetica (strain ATCC 39073 / JCM 9320)).